Reading from the N-terminus, the 340-residue chain is Proline-rich transmembrane protein 2 (340 aa).

A disordered region spans residues M1–G261. Residues M1–Y268 lie on the Cytoplasmic side of the membrane. A compositionally biased stretch (basic and acidic residues) spans S9–P18. Phosphoserine is present on S28. At T74 the chain carries Phosphothreonine. Pro residues-rich tracts occupy residues P131–A155 and A197–K207. S238 is modified (phosphoserine). R240 bears the Omega-N-methylarginine mark. Phosphoserine occurs at positions 248 and 249. The helical intramembrane region spans I269–A289. The Cytoplasmic segment spans residues Y290–S317. A helical membrane pass occupies residues I318–V338. At Y339 to K340 the chain is on the extracellular side.

It belongs to the CD225/Dispanin family. Component of the outer core of AMPAR complex. AMPAR complex consists of an inner core made of 4 pore-forming GluA/GRIA proteins (GRIA1, GRIA2, GRIA3 and GRIA4) and 4 major auxiliary subunits arranged in a twofold symmetry. One of the two pairs of distinct binding sites is occupied either by CNIH2, CNIH3 or CACNG2, CACNG3. The other harbors CACNG2, CACNG3, CACNG4, CACNG8 or GSG1L. This inner core of AMPAR complex is complemented by outer core constituents binding directly to the GluA/GRIA proteins at sites distinct from the interaction sites of the inner core constituents. Outer core constituents include at least PRRT1, PRRT2, CKAMP44/SHISA9, FRRS1L and NRN1. The proteins of the inner and outer core serve as a platform for other, more peripherally associated AMPAR constituents. Alone or in combination, these auxiliary subunits control the gating and pharmacology of the AMPAR complex and profoundly impact their biogenesis and protein processing. Interacts with intersectin 1/ITSN1. Interacts with SNARE complex components, including SNAP25, STX1A, SYT1 and SYT2; this interaction may inhibit SNARE complex formation.

The protein resides in the cell membrane. It is found in the presynaptic cell membrane. It localises to the synapse. Its subcellular location is the cell projection. The protein localises to the axon. The protein resides in the cytoplasmic vesicle. It is found in the secretory vesicle. It localises to the synaptic vesicle membrane. Its subcellular location is the postsynaptic density membrane. The protein localises to the dendritic spine. Functionally, as a component of the outer core of AMPAR complex, may be involved in synaptic transmission in the central nervous system. In hippocampal neurons, in presynaptic terminals, plays an important role in the final steps of neurotransmitter release, possibly by regulating Ca(2+)-sensing. In the cerebellum, may inhibit SNARE complex formation and down-regulate short-term facilitation. This Homo sapiens (Human) protein is Proline-rich transmembrane protein 2 (PRRT2).